A 1402-amino-acid polypeptide reads, in one-letter code: Baculoviral IAP repeat-containing protein 1g (1402 aa).

3 BIR repeats span residues Glu-60–Leu-127, Glu-159–Leu-227, and Glu-278–Leu-345. Cys-315, Cys-318, His-335, and Cys-342 together coordinate Zn(2+). Positions Ser-464 to Glu-759 constitute an NACHT domain. An ATP-binding site is contributed by Lys-476.

Functionally, prevents motor-neuron apoptosis induced by a variety of signals. This chain is Baculoviral IAP repeat-containing protein 1g (Naip7), found in Mus musculus (Mouse).